The chain runs to 256 residues: Kallikrein-15 (256 aa).

The N-terminal stretch at 1 to 16 (MWLLLTLSFLLASTAA) is a signal peptide. Positions 17–21 (QDGDK) are cleaved as a propeptide — activation peptide. Positions 22–254 (LLEGDECAPH…YLEWIRETMK (233 aa)) constitute a Peptidase S1 domain. Residues Cys-47 and Cys-63 are joined by a disulfide bond. Residues His-62 and Asp-106 each act as charge relay system in the active site. Intrachain disulfides connect Cys-138–Cys-215, Cys-180–Cys-194, and Cys-205–Cys-230. An N-linked (GlcNAc...) asparagine glycan is attached at Asn-171. Residue Ser-209 is the Charge relay system of the active site. N-linked (GlcNAc...) asparagine glycosylation occurs at Asn-232.

Belongs to the peptidase S1 family. Kallikrein subfamily. As to expression, highest expression in the thyroid gland. Also expressed in the prostate, salivary, and adrenal glands and in the colon testis and kidney.

It localises to the secreted. In terms of biological role, protease whose physiological substrate is not yet known. This chain is Kallikrein-15 (KLK15), found in Homo sapiens (Human).